Consider the following 858-residue polypeptide: Heat shock protein 105 kDa (858 aa).

Residue serine 2 is modified to N-acetylserine. Lysine 471 bears the N6-acetyllysine mark. 2 disordered regions span residues 500–585 and 801–858; these read KVPT…PPEA and VTQP…MDLD. The segment covering 504 to 515 has biased composition (acidic residues); that stretch reads EEEDGSSVEADM. 2 positions are modified to phosphoserine: serine 509 and serine 510. Positions 533-555 are enriched in polar residues; sequence QQDNSEAGTQPQVQTDGQQTSQS. Serine 558 is modified (phosphoserine). Residue threonine 562 is modified to Phosphothreonine. 2 stretches are compositionally biased toward basic and acidic residues: residues 564–585 and 806–815; these read EENKIPDADKANEKKVDQPPEA and PKIESPKLER. Phosphoserine is present on serine 810. The residue at position 816 (threonine 816) is a Phosphothreonine.

This sequence belongs to the heat shock protein 70 family. As to quaternary structure, interacts with HSPA8/HSC70. Interacts with HSPA1A (via NBD) and HSPA1B (via NBD). Phosphorylation on Ser-509 may be important for regulation of the HSPA8/HSC70 chaperone activity.

The protein resides in the cytoplasm. Functionally, acts as a nucleotide-exchange factor (NEF) for chaperone proteins HSPA1A and HSPA1B, promoting the release of ADP from HSPA1A/B thereby triggering substrate release. Prevents the aggregation of denatured proteins in cells under severe stress, on which the ATP levels decrease markedly. Inhibits HSPA8/HSC70 ATPase and chaperone activities. This chain is Heat shock protein 105 kDa (Hsph1), found in Rattus norvegicus (Rat).